Consider the following 224-residue polypeptide: UPF0758 protein VCM66_0205 (224 aa).

The interval 1–20 is disordered; that stretch reads MSLKQLPTESMPREKLLQRG. Residues 102–224 form the MPN domain; it reads ALTSPQQTKL…VVSFAERGWI (123 aa). His173, His175, and Asp186 together coordinate Zn(2+). Positions 173 to 186 match the JAMM motif motif; the sequence is HNHPSGVAEPSQAD.

It belongs to the UPF0758 family.

The protein is UPF0758 protein VCM66_0205 of Vibrio cholerae serotype O1 (strain M66-2).